Here is a 423-residue protein sequence, read N- to C-terminus: Glutamyl-tRNA reductase (423 aa).

Residues 49 to 52 (TCNR), Ser-107, 112 to 114 (EPQ), and Gln-118 each bind substrate. Cys-50 serves as the catalytic Nucleophile. An NADP(+)-binding site is contributed by 187–192 (GAGETI).

The protein belongs to the glutamyl-tRNA reductase family. In terms of assembly, homodimer.

It catalyses the reaction (S)-4-amino-5-oxopentanoate + tRNA(Glu) + NADP(+) = L-glutamyl-tRNA(Glu) + NADPH + H(+). Its pathway is porphyrin-containing compound metabolism; protoporphyrin-IX biosynthesis; 5-aminolevulinate from L-glutamyl-tRNA(Glu): step 1/2. Its function is as follows. Catalyzes the NADPH-dependent reduction of glutamyl-tRNA(Glu) to glutamate 1-semialdehyde (GSA). This Pseudoalteromonas atlantica (strain T6c / ATCC BAA-1087) protein is Glutamyl-tRNA reductase.